The following is a 259-amino-acid chain: 5'-nucleotidase SurE (259 aa).

A divalent metal cation-binding residues include D10, D11, S41, and N96.

The protein belongs to the SurE nucleotidase family. The cofactor is a divalent metal cation.

It localises to the cytoplasm. It catalyses the reaction a ribonucleoside 5'-phosphate + H2O = a ribonucleoside + phosphate. Functionally, nucleotidase that shows phosphatase activity on nucleoside 5'-monophosphates. In Wolinella succinogenes (strain ATCC 29543 / DSM 1740 / CCUG 13145 / JCM 31913 / LMG 7466 / NCTC 11488 / FDC 602W) (Vibrio succinogenes), this protein is 5'-nucleotidase SurE.